Consider the following 246-residue polypeptide: Probable transcriptional regulatory protein WP1214 (246 aa).

The disordered stretch occupies residues 1–22; that stretch reads MAGHSQFSNIKHRKGAQDAKRS.

The protein belongs to the TACO1 family.

Its subcellular location is the cytoplasm. This chain is Probable transcriptional regulatory protein WP1214, found in Wolbachia pipientis subsp. Culex pipiens (strain wPip).